A 283-amino-acid polypeptide reads, in one-letter code: Pantothenate synthetase (283 aa).

30-37 lines the ATP pocket; the sequence is MGNLHDAH. His37 functions as the Proton donor in the catalytic mechanism. Gln61 lines the (R)-pantoate pocket. Gln61 is a binding site for beta-alanine. 149 to 152 contacts ATP; the sequence is GVKD. Gln155 lines the (R)-pantoate pocket. Residues Val178 and 186 to 189 contribute to the ATP site; that span reads MSSR.

It belongs to the pantothenate synthetase family. Homodimer.

It is found in the cytoplasm. The enzyme catalyses (R)-pantoate + beta-alanine + ATP = (R)-pantothenate + AMP + diphosphate + H(+). It functions in the pathway cofactor biosynthesis; (R)-pantothenate biosynthesis; (R)-pantothenate from (R)-pantoate and beta-alanine: step 1/1. Functionally, catalyzes the condensation of pantoate with beta-alanine in an ATP-dependent reaction via a pantoyl-adenylate intermediate. The sequence is that of Pantothenate synthetase from Cellvibrio japonicus (strain Ueda107) (Pseudomonas fluorescens subsp. cellulosa).